The primary structure comprises 864 residues: Leucine--tRNA ligase (864 aa).

A 'HIGH' region motif is present at residues Pro-47–His-57. A disordered region spans residues Ser-298 to Thr-317. A compositionally biased stretch (basic and acidic residues) spans Glu-299–Lys-309. Positions Lys-622 to Ser-626 match the 'KMSKS' region motif. Lys-625 is an ATP binding site.

This sequence belongs to the class-I aminoacyl-tRNA synthetase family.

It localises to the cytoplasm. The catalysed reaction is tRNA(Leu) + L-leucine + ATP = L-leucyl-tRNA(Leu) + AMP + diphosphate. The polypeptide is Leucine--tRNA ligase (Synechococcus sp. (strain RCC307)).